The primary structure comprises 565 residues: Efflux pump aunC (565 aa).

The span at 1–14 (MSDTARISGGSFTS) shows a compositional bias: polar residues. Residues 1–57 (MSDTARISGGSFTSPPGRDVELNSFKEASQTRLYPYSSRKEEEGREDEQQRPEREED) form a disordered region. Basic and acidic residues predominate over residues 38 to 54 (SRKEEEGREDEQQRPER). 14 helical membrane-spanning segments follow: residues 59–79 (GALTGYKLVLVTVGLCFCIFC), 103–123 (DVGWYASAYLLTTCAVTLPFG), 128–148 (FFPIKWVYLSALFVFELGSFI), 164–184 (VAGLGGGGLFSGSLLIITQCV), 194–214 (GFIMSIFAVASVIAPLMGGAF), 222–242 (WCFYINLPFGLVSAVVIFFTF), 257–277 (AAGLDPLGTATFLPAIVCLLL), 293–313 (IIALFTLFGVLLACFVGLQLW), 335–355 (LYGFCLNGAMFTFVYYLPIWF), 378–398 (VIFAIISGVLVSATGYFGPFM), 399–419 (LLSAAMASIAAGLLSMLHPSS), 425–445 (IGYQVLLGSSIGMGFQLPVFV), 457–477 (TATALMTFIQLLGGAIFVSVA), and 530–550 (VHTFYLAIGLAAASFLAATVI).

The protein belongs to the major facilitator superfamily. TCR/Tet family.

The protein localises to the cell membrane. Its function is as follows. Efflux pump; part of the gene cluster that mediates the biosynthesis of aurasperone B, a dimeric gamma-naphthopyrone. The polypeptide is Efflux pump aunC (Aspergillus niger (strain ATCC MYA-4892 / CBS 513.88 / FGSC A1513)).